The primary structure comprises 431 residues: Enolase (431 aa).

Gln167 is a binding site for (2R)-2-phosphoglycerate. Glu209 functions as the Proton donor in the catalytic mechanism. The Mg(2+) site is built by Asp246, Glu290, and Asp317. Residues Lys342, Arg371, Ser372, and Lys393 each contribute to the (2R)-2-phosphoglycerate site. The Proton acceptor role is filled by Lys342.

The protein belongs to the enolase family. In terms of assembly, component of the RNA degradosome, a multiprotein complex involved in RNA processing and mRNA degradation. Mg(2+) serves as cofactor.

Its subcellular location is the cytoplasm. It localises to the secreted. It is found in the cell surface. It carries out the reaction (2R)-2-phosphoglycerate = phosphoenolpyruvate + H2O. The protein operates within carbohydrate degradation; glycolysis; pyruvate from D-glyceraldehyde 3-phosphate: step 4/5. Functionally, catalyzes the reversible conversion of 2-phosphoglycerate (2-PG) into phosphoenolpyruvate (PEP). It is essential for the degradation of carbohydrates via glycolysis. The sequence is that of Enolase from Yersinia enterocolitica serotype O:8 / biotype 1B (strain NCTC 13174 / 8081).